A 482-amino-acid polypeptide reads, in one-letter code: Probable polyamine transporter At1g31820 (482 aa).

Helical transmembrane passes span 36–56, 66–86, 94–114, 143–163, 171–191, 254–274, 294–314, 344–364, 367–387, 406–426, and 429–449; these read VSML…PFGA, LLAL…EALI, FPIN…FWGF, VPAL…TLLL, LTIV…PFAV, VIFV…AIPL, GWLQ…MFLA, TPLL…GLSF, IIAA…IAFV, TVGS…VIVL, and IKVA…KPCL.

This sequence belongs to the amino acid-polyamine-organocation (APC) superfamily. Polyamine:cation symporter (PHS) (TC 2.A.3.12) family.

It localises to the cell membrane. Probable cell membrane polyamine/proton symporter involved in the polyamine uptake in cells. In Arabidopsis thaliana (Mouse-ear cress), this protein is Probable polyamine transporter At1g31820.